Consider the following 708-residue polypeptide: Leukotoxin translocation ATP-binding protein LktB (708 aa).

In terms of domain architecture, Peptidase C39 spans 1–126; that stretch reads MEANHQRNDL…ACYQGQLILV (126 aa). The region spanning 155–437 is the ABC transmembrane type-1 domain; sequence FLETLIVSIF…LAQLWQDFQQ (283 aa). The next 5 helical transmembrane spans lie at 159–179, 192–212, 270–290, 296–316, and 389–409; these read LIVS…FQVV, LNII…LSGL, ALTS…MWYY, LVIL…SPIL, and VMVI…LSIG. In terms of domain architecture, ABC transporter spans 469–704; sequence ISFKNIRFRY…SNGLYSYLHQ (236 aa). 503–510 contributes to the ATP binding site; the sequence is GRSGSGKS.

It belongs to the ABC transporter superfamily. Protein-1 exporter (TC 3.A.1.109) family. As to quaternary structure, homodimer.

The protein localises to the cell inner membrane. It catalyses the reaction ATP + H2O + proteinSide 1 = ADP + phosphate + proteinSide 2.. Part of the ABC transporter complex LktBD involved in leukotoxin export. Transmembrane domains (TMD) form a pore in the inner membrane and the ATP-binding domain (NBD) is responsible for energy generation. The protein is Leukotoxin translocation ATP-binding protein LktB (lktB) of Mannheimia haemolytica (Pasteurella haemolytica).